The following is a 1787-amino-acid chain: Chromodomain-helicase-DNA-binding protein 3 homolog (1787 aa).

Disordered stretches follow at residues 1–80 and 170–258; these read MSDD…PDPY and PVTP…KEQG. Positions 10–43 are enriched in acidic residues; that stretch reads DGDETMEEDSMLAEGHEDGEEDVGEDEEEVETEE. The span at 56 to 71 shows a compositional bias: basic residues; it reads PPPKKKKGGKKSSKKK. Positions 192–243 are enriched in basic and acidic residues; the sequence is DGSDGEGGGHDSDQEFEALIKQHEKQQDEAEKGKEEARINRAAAKVDKRKAA. PHD-type zinc fingers lie at residues 265–312 and 328–375; these read QENC…CEEH and MDYC…CIIP. Chromo domains follow at residues 373–476 and 501–583; these read IIPE…STLS and MQIH…GPKE. The region spanning 628-812 is the Helicase ATP-binding domain; sequence RHCWSNGTDA…FHLLNFLAPD (185 aa). 641–648 contributes to the ATP binding site; the sequence is DEMGLGKT. A DEAH box motif is present at residues 763–766; the sequence is DEAH. A Helicase C-terminal domain is found at 944–1107; the sequence is LLQKMLRKLK…GKSMSKTELD (164 aa). Disordered stretches follow at residues 1120–1141, 1186–1212, 1248–1295, and 1754–1787; these read EEEAPVEGADGEGTSSKKPNEQ, TKEADDADDDEDETEVIKEGTEEQDPN, ENMG…EERS, and RASSIAATKDEPMDTSDKDIPSTSAAAGSSYPRY. Residues 1190 to 1199 are compositionally biased toward acidic residues; it reads DDADDDEDET. Positions 1248-1261 are enriched in polar residues; it reads ENMGQDWSAQNNQQ. Positions 1761–1773 are enriched in basic and acidic residues; that stretch reads TKDEPMDTSDKDI.

It belongs to the SNF2/RAD54 helicase family. Expressed in the head and vulva.

Its subcellular location is the nucleus. It catalyses the reaction ATP + H2O = ADP + phosphate + H(+). In terms of biological role, ATP-dependent chromatin-remodeling factor that has a role in notch signaling-dependent vulval cell fate determination. May also have a role in pharyngeal precursor cell specification. In Caenorhabditis elegans, this protein is Chromodomain-helicase-DNA-binding protein 3 homolog (chd-3).